Here is a 295-residue protein sequence, read N- to C-terminus: Small ribosomal subunit protein uS2 (295 aa).

Ser2 is subject to N-acetylserine. Ser43 is modified (phosphoserine). Lys52 bears the N6-acetyllysine mark. The interval Thr54–Gln113 is interaction with PPP1R16B. Lys89 carries the post-translational modification N6-acetyllysine; alternate. Lys89 is covalently cross-linked (Glycyl lysine isopeptide (Lys-Gly) (interchain with G-Cter in SUMO2); alternate). Position 97 is a phosphothreonine (Thr97). 2 laminin-binding regions span residues Ile161–Arg180 and Arg205–Gly229. 5 [DE]-W-[ST] repeats span residues Glu230–Thr232, Asp247–Ser249, Asp266–Ser268, Asp275–Ser277, and Glu293–Ser295. The interval Gln242–Ser295 is laminin-binding. The disordered stretch occupies residues Asp266–Ser295.

Belongs to the universal ribosomal protein uS2 family. As to quaternary structure, monomer (37LRP) and homodimer (67LR). Component of the small ribosomal subunit. Mature ribosomes consist of a small (40S) and a large (60S) subunit. The 40S subunit contains about 33 different proteins and 1 molecule of RNA (18S). The 60S subunit contains about 49 different proteins and 3 molecules of RNA (28S, 5.8S and 5S). Interacts with RPS21. Interacts with several laminins including at least LAMB1. Interacts with MDK. The mature dimeric form interacts with PPP1R16B (via its fourth ankyrin repeat). Interacts with PPP1CA only in the presence of PPP1R16B. Acylated. Acylation may be a prerequisite for conversion of the monomeric 37 kDa laminin receptor precursor (37LRP) to the mature dimeric 67 kDa laminin receptor (67LR), and may provide a mechanism for membrane association. In terms of processing, cleaved by stromelysin-3 (ST3) at the cell surface. Cleavage by stromelysin-3 may be a mechanism to alter cell-extracellular matrix interactions.

The protein localises to the cell membrane. Its subcellular location is the cytoplasm. It is found in the nucleus. Functionally, required for the assembly and/or stability of the 40S ribosomal subunit. Required for the processing of the 20S rRNA-precursor to mature 18S rRNA in a late step of the maturation of 40S ribosomal subunits. Also functions as a cell surface receptor for laminin. Plays a role in cell adhesion to the basement membrane and in the consequent activation of signaling transduction pathways. May play a role in cell fate determination and tissue morphogenesis. Also acts as a receptor for several other ligands, including the pathogenic prion protein, viruses, and bacteria. Acts as a PPP1R16B-dependent substrate of PPP1CA. The chain is Small ribosomal subunit protein uS2 from Bos taurus (Bovine).